The following is an 89-amino-acid chain: Small ribosomal subunit protein uS17 (89 aa).

The protein belongs to the universal ribosomal protein uS17 family. Part of the 30S ribosomal subunit.

Functionally, one of the primary rRNA binding proteins, it binds specifically to the 5'-end of 16S ribosomal RNA. This chain is Small ribosomal subunit protein uS17, found in Leptospira interrogans serogroup Icterohaemorrhagiae serovar Lai (strain 56601).